Here is a 377-residue protein sequence, read N- to C-terminus: 23S rRNA (uracil(747)-C(5))-methyltransferase RlmC (377 aa).

Residues Cys3, Cys11, Cys14, and Cys87 each coordinate [4Fe-4S] cluster. The S-adenosyl-L-methionine site is built by Gln212, Phe241, Glu262, and Asn307. Cys334 acts as the Nucleophile in catalysis.

This sequence belongs to the class I-like SAM-binding methyltransferase superfamily. RNA M5U methyltransferase family. RlmC subfamily.

It catalyses the reaction uridine(747) in 23S rRNA + S-adenosyl-L-methionine = 5-methyluridine(747) in 23S rRNA + S-adenosyl-L-homocysteine + H(+). In terms of biological role, catalyzes the formation of 5-methyl-uridine at position 747 (m5U747) in 23S rRNA. The sequence is that of 23S rRNA (uracil(747)-C(5))-methyltransferase RlmC from Photorhabdus laumondii subsp. laumondii (strain DSM 15139 / CIP 105565 / TT01) (Photorhabdus luminescens subsp. laumondii).